The chain runs to 758 residues: Relaxin receptor 1 (758 aa).

Topologically, residues 1-408 (MTSGPFFFCV…LENLLASIIQ (408 aa)) are extracellular. One can recognise an LDL-receptor class A domain in the interval 26–63 (SCPLGSFPCGNISKCLPQLLHCNGVDDCGNQADEDNCG). Disulfide bonds link cysteine 27–cysteine 40, cysteine 34–cysteine 53, and cysteine 47–cysteine 62. The N-linked (GlcNAc...) asparagine glycan is linked to asparagine 36. Ca(2+) is bound by residues leucine 45, asparagine 48, valine 50, aspartate 52, aspartate 58, and glutamate 59. LRR repeat units lie at residues 105–125 (LCRD…PSVS), 126–148 (SNVT…SFRK), 149–172 (YHDL…AFRG), 173–196 (LHSL…VFED), 198–220 (HRLE…TFYG), 221–244 (LNSL…PLCQ), 246–269 (MPRL…TFIS), 270–293 (CNNL…AFTH), 294–317 (LQKL…IFKD), 319–341 (KELS…QFDY), and 342–365 (LAKL…MFRP). Asparagine 127 is a glycosylation site (N-linked (GlcNAc...) asparagine). N-linked (GlcNAc...) asparagine glycans are attached at residues asparagine 264 and asparagine 272. The N-linked (GlcNAc...) asparagine glycan is linked to asparagine 325. Asparagine 368 carries N-linked (GlcNAc...) asparagine glycosylation. A helical membrane pass occupies residues 409–429 (RVFVWVVSAITCFGNIFVICM). At 430 to 443 (RPYIRSENKLHAMS) the chain is on the cytoplasmic side. Residues 444–464 (IMSLCCADCLMGVYLFVIGAF) form a helical membrane-spanning segment. Residues 465-486 (DLKFRGEYRKHAQPWMESVHCQ) are Extracellular-facing. The cysteines at positions 485 and 563 are disulfide-linked. A helical membrane pass occupies residues 487-507 (FMGSLAVLSTEVSVLLLTFLT). Topologically, residues 508–527 (LEKYICIVYPFRCLRPRKCR) are cytoplasmic. A helical membrane pass occupies residues 528–548 (TVAVLIFIWITGFIVAFAPLG). Topologically, residues 549–577 (NKEFFKNYYGTNGVCFPLHSEDTGSTGAQ) are extracellular. Residues 578-598 (IYSVVIFLGINLVAFIIIVFS) traverse the membrane as a helical segment. The Cytoplasmic segment spans residues 599–629 (YGSMFYSVHQSTITATEIQKQVKKEMILAKR). The helical transmembrane segment at 630 to 650 (FFFIVFTDALCWIPIFILKFL) threads the bilayer. Topologically, residues 651-660 (SLIRVEIPDT) are extracellular. The helical transmembrane segment at 661–681 (ITSWVVIFILPINSALNPIIY) threads the bilayer. Topologically, residues 682–758 (TLTTRPFKEM…SRSSRLNSYS (77 aa)) are cytoplasmic.

This sequence belongs to the G-protein coupled receptor 1 family. Interacts with C1QTNF8. Detected in brain cortex, and at low levels in testis.

It localises to the cell membrane. Its function is as follows. Receptor for relaxins. The activity of this receptor is mediated by G proteins leading to stimulation of adenylate cyclase and an increase of cAMP. Binding of the ligand may also activate a tyrosine kinase pathway that inhibits the activity of a phosphodiesterase that degrades cAMP. The polypeptide is Relaxin receptor 1 (Rxfp1) (Rattus norvegicus (Rat)).